We begin with the raw amino-acid sequence, 284 residues long: MEMO1 family protein Mevan_0697 (284 aa).

It belongs to the MEMO1 family.

The polypeptide is MEMO1 family protein Mevan_0697 (Methanococcus vannielii (strain ATCC 35089 / DSM 1224 / JCM 13029 / OCM 148 / SB)).